The primary structure comprises 350 residues: Hydroxymethylglutaryl-CoA synthase (350 aa).

The (3S)-3-hydroxy-3-methylglutaryl-CoA site is built by aspartate 33 and valine 34. Glutamate 85 functions as the Proton donor/acceptor in the catalytic mechanism. (3S)-3-hydroxy-3-methylglutaryl-CoA contacts are provided by cysteine 117 and threonine 158. Cysteine 117 (acyl-thioester intermediate) is an active-site residue. Arginine 204 provides a ligand contact to CoA. Threonine 206 and histidine 239 together coordinate (3S)-3-hydroxy-3-methylglutaryl-CoA. Histidine 239 functions as the Proton donor/acceptor in the catalytic mechanism. Residue lysine 244 coordinates CoA. 3 residues coordinate (3S)-3-hydroxy-3-methylglutaryl-CoA: lysine 248, asparagine 271, and serine 301.

The protein belongs to the thiolase-like superfamily. Archaeal HMG-CoA synthase family. As to quaternary structure, interacts with acetoacetyl-CoA thiolase that catalyzes the precedent step in the pathway and with a DUF35 protein. The acetoacetyl-CoA thiolase/HMG-CoA synthase complex channels the intermediate via a fused CoA-binding site, which allows for efficient coupling of the endergonic thiolase reaction with the exergonic HMGCS reaction.

The catalysed reaction is acetoacetyl-CoA + acetyl-CoA + H2O = (3S)-3-hydroxy-3-methylglutaryl-CoA + CoA + H(+). The protein operates within metabolic intermediate biosynthesis; (R)-mevalonate biosynthesis; (R)-mevalonate from acetyl-CoA: step 2/3. Functionally, catalyzes the condensation of acetyl-CoA with acetoacetyl-CoA to form 3-hydroxy-3-methylglutaryl-CoA (HMG-CoA). Functions in the mevalonate (MVA) pathway leading to isopentenyl diphosphate (IPP), a key precursor for the biosynthesis of isoprenoid compounds that are building blocks of archaeal membrane lipids. The chain is Hydroxymethylglutaryl-CoA synthase from Methanopyrus kandleri (strain AV19 / DSM 6324 / JCM 9639 / NBRC 100938).